Here is a 756-residue protein sequence, read N- to C-terminus: 1,4-alpha-glucan branching enzyme GlgB (756 aa).

The active-site Nucleophile is the D425. The active-site Proton donor is E478.

Belongs to the glycosyl hydrolase 13 family. GlgB subfamily. In terms of assembly, monomer.

The catalysed reaction is Transfers a segment of a (1-&gt;4)-alpha-D-glucan chain to a primary hydroxy group in a similar glucan chain.. It functions in the pathway glycan biosynthesis; glycogen biosynthesis. Functionally, catalyzes the formation of the alpha-1,6-glucosidic linkages in glycogen by scission of a 1,4-alpha-linked oligosaccharide from growing alpha-1,4-glucan chains and the subsequent attachment of the oligosaccharide to the alpha-1,6 position. The chain is 1,4-alpha-glucan branching enzyme GlgB from Cupriavidus necator (strain ATCC 17699 / DSM 428 / KCTC 22496 / NCIMB 10442 / H16 / Stanier 337) (Ralstonia eutropha).